A 430-amino-acid polypeptide reads, in one-letter code: DD-carboxypeptidase/endopeptidase Mpg (430 aa).

Zn(2+)-binding residues include His-295, Asp-299, and His-375.

Belongs to the peptidase M23B family. As to quaternary structure, monomer. It depends on Zn(2+) as a cofactor. In terms of processing, likely to be synthesized as a proenzyme. The cleavage of the N-terminal domain is probably required for the activation of the enzyme.

The protein resides in the cell outer membrane. Its function is as follows. Has both endopeptidase and DD-carboxypeptidase activities. Degrades cell wall peptidoglycan (PG) to allow consummate expression of pili. The protein is DD-carboxypeptidase/endopeptidase Mpg of Neisseria meningitidis serogroup B (strain ATCC 13091 / M2091).